We begin with the raw amino-acid sequence, 251 residues long: MTEAQRHQILLDMLAQLGFVTVENVIERLGISPATARRDINKLDESGKLKKVRNGAEAITQQRPRWTPMNLHQAQNHDEKVRIAKAASQLVNPGESVVINCGSTAFLLGREMCGKPVQIITNYLPLANYLIDQEHDSVIIMGGQYNKSQSITLSPQGSENSLYAGHWMFTSGKGLTADGLYKTDMLTAMAEQKMLSVVGKLVALVDSSKIGERAGMLFSRADQIAMLITGKNANPQVLQQLEAQGVSILRV.

The HTH deoR-type domain maps to 3 to 58 (EAQRHQILLDMLAQLGFVTVENVIERLGISPATARRDINKLDESGKLKKVRNGAEA). Residues 20–39 (VTVENVIERLGISPATARRD) constitute a DNA-binding region (H-T-H motif).

The protein resides in the cytoplasm. Represses ulaG and the ulaABCDEF operon. This is HTH-type transcriptional regulator UlaR from Salmonella agona (strain SL483).